A 293-amino-acid polypeptide reads, in one-letter code: N(1)-aminopropylagmatine ureohydrolase (293 aa).

The Mn(2+) site is built by His105, Asp128, His130, Asp132, Asp210, and Asp212.

It belongs to the arginase family. Mn(2+) is required as a cofactor.

Its subcellular location is the cytoplasm. It catalyses the reaction N(1)-(3-aminopropyl)agmatine + H2O = urea + spermidine. Its pathway is amine and polyamine biosynthesis; spermidine biosynthesis. Functionally, involved in the biosynthesis of polyamines which are thought to support the growth of thermophilic microorganisms under high-temperature conditions. It seems that long-chain and branched-chain of polyamines effectively stabilize DNA and RNA, respectively. Catalyzes the decarboxylation of N1-(3-aminopropyl)agmatine to yield spermidine and urea. It cannot use agmatine as substrate. This chain is N(1)-aminopropylagmatine ureohydrolase, found in Thermus thermophilus (strain ATCC 27634 / DSM 579 / HB8).